The following is a 131-amino-acid chain: Chorion class high-cysteine HCB protein 12 (131 aa).

An N-terminal signal peptide occupies residues 1 to 21 (MAAKLIVFVCAIALVAQSVLG). A left arm region spans residues 22–46 (TGCGCCCRGCGCGCGGCGCGCCENF). Residues 47 to 110 (RVCSNSAAPT…GNGCVGITRS (64 aa)) are central domain. Residues 111–131 (CGGCGCGCGGCGCGCGGCGCC) form a right arm (Gly-rich tandem repeats) region.

Belongs to the chorion protein family.

Its function is as follows. This protein is one of many from the eggshell of the silk moth. This Bombyx mori (Silk moth) protein is Chorion class high-cysteine HCB protein 12.